The following is a 121-amino-acid chain: uncharacterized protein (121 aa).

Residues 20-98 form a disordered region; sequence NEVRTSQSEV…PYYHGSKAST (79 aa). Residues 35-51 show a composition bias toward basic and acidic residues; the sequence is KKSDNGEKDEKEEKELN.

This is an uncharacterized protein from Invertebrate iridescent virus 6 (IIV-6).